Reading from the N-terminus, the 68-residue chain is Non-disulfide-bridged peptide 5.6 (68 aa).

The signal sequence occupies residues 1-23 (MKTQVIIFIMAVVFLQLLSQSEA). The propeptide occupies 37–68 (ELRNIDLDQFDDMFDEPEISAADMRFLQELLK).

Belongs to the non-disulfide-bridged peptide (NDBP) superfamily. Short antimicrobial peptide (group 4) family. In terms of tissue distribution, expressed by the venom gland.

Its subcellular location is the secreted. The protein localises to the target cell membrane. In terms of biological role, antibacterial peptide with activity against both Gram-positive and Gram-negative bacteria probably by forming pores in the cell membrane. Also has weak hemolytic activity. Does not show antifungal activity. In Hoffmannihadrurus gertschi (Scorpion), this protein is Non-disulfide-bridged peptide 5.6.